The sequence spans 260 residues: Dehydrogenase/reductase SDR family member 4 (260 aa).

An NADP(+)-binding site is contributed by 18 to 42 (IVTASTDGIGLAIARRLAQDGAHVV). K74 is subject to N6-acetyllysine; alternate. K74 is modified (N6-succinyllysine; alternate). S151 is a binding site for substrate. Y164 (proton acceptor) is an active-site residue. An NADP(+)-binding site is contributed by K168. K198 is modified (N6-acetyllysine; alternate). N6-succinyllysine; alternate is present on K198. S202 carries the phosphoserine modification. K209 is modified (N6-succinyllysine). A Peroxisomal targeting signal motif is present at residues 258 to 260 (SRL).

Belongs to the short-chain dehydrogenases/reductases (SDR) family. Homotetramer. Detected in liver and kidney. Detected at lower levels in heart, lung, spleen, small intestine, testis, brain and stomach.

Its subcellular location is the peroxisome. It catalyses the reaction a secondary alcohol + NADP(+) = a ketone + NADPH + H(+). The enzyme catalyses 3alpha-hydroxy-5beta-pregnan-20-one + NADP(+) = 5beta-pregnan-3,20-dione + NADPH + H(+). It carries out the reaction 5beta-dihydrotestosterone + NADPH + H(+) = 5beta-androstane-3alpha,17beta-diol + NADP(+). The catalysed reaction is all-trans-retinol + NADP(+) = all-trans-retinal + NADPH + H(+). It catalyses the reaction isatin + NADPH + H(+) = 3-hydroxyindolin-2-one + NADP(+). Its activity is regulated as follows. Inhibited by flavonoids (kaempferol, quercetin, quercitrin, genistein), myristic acid, pyrazole, barbital, phenobarbital and CuSO4. Functionally, NADPH-dependent oxidoreductase which catalyzes the reduction of a variety of compounds bearing carbonyl groups including ketosteroids, alpha-dicarbonyl compounds, aldehydes, aromatic ketones and quinones. Reduces all-trans-retinal and 9-cis retinal. Reduces 3-ketosteroids and benzil into 3alpha-hydroxysteroids and S-benzoin, respectively, in contrast to the stereoselectivity of primates DHRS4s which produce 3beta-hydroxysteroids and R-benzoin. In the reverse reaction, catalyze the NADP-dependent oxidation of 3alpha-hydroxysteroids and alcohol, but with much lower efficiency. Involved in the metabolism of 3alpha-hydroxysteroids, retinoid, isatin and xenobiotic carbonyl compounds. This chain is Dehydrogenase/reductase SDR family member 4 (DHRS4), found in Oryctolagus cuniculus (Rabbit).